The primary structure comprises 734 residues: Photosystem I P700 chlorophyll a apoprotein A2 (734 aa).

Helical transmembrane passes span 46-69 (IFASHFGQLAVIFLWTSGNLFHVA), 135-158 (LYRGALFLLFLSTLALLAGWLHLQ), 175-199 (LNHHLSGLFGVSSLAWSGHLVHVAI), 273-291 (IAHHHLAIAILFIVAGHMY), 330-353 (LHFQLGLALASLGVITSLVAQHMY), 369-395 (AALYTHHQYIAGFIMVGAFAHGAIFFI), 417-439 (AIISHLSWASLFLGFHTLGLYVH), and 517-535 (FLVHHAIALGLHTTTLILV). The [4Fe-4S] cluster site is built by Cys-559 and Cys-568. A run of 2 helical transmembrane segments spans residues 575 to 596 (AFYLAVFWMLNTIGWVTFYWHW) and 643 to 665 (LSVWAWMFLFGHLIWATGFMFLI). His-654, Met-662, and Tyr-670 together coordinate chlorophyll a. Trp-671 provides a ligand contact to phylloquinone. The chain crosses the membrane as a helical span at residues 707–727 (LVGLSHFSVGYIFTYAAFLIA).

The protein belongs to the PsaA/PsaB family. As to quaternary structure, the PsaA/B heterodimer binds the P700 chlorophyll special pair and subsequent electron acceptors. PSI consists of a core antenna complex that captures photons, and an electron transfer chain that converts photonic excitation into a charge separation. The eukaryotic PSI reaction center is composed of at least 11 subunits. P700 is a chlorophyll a/chlorophyll a' dimer, A0 is one or more chlorophyll a, A1 is one or both phylloquinones and FX is a shared 4Fe-4S iron-sulfur center. is required as a cofactor.

Its subcellular location is the plastid. It localises to the chloroplast thylakoid membrane. The catalysed reaction is reduced [plastocyanin] + hnu + oxidized [2Fe-2S]-[ferredoxin] = oxidized [plastocyanin] + reduced [2Fe-2S]-[ferredoxin]. PsaA and PsaB bind P700, the primary electron donor of photosystem I (PSI), as well as the electron acceptors A0, A1 and FX. PSI is a plastocyanin-ferredoxin oxidoreductase, converting photonic excitation into a charge separation, which transfers an electron from the donor P700 chlorophyll pair to the spectroscopically characterized acceptors A0, A1, FX, FA and FB in turn. Oxidized P700 is reduced on the lumenal side of the thylakoid membrane by plastocyanin. The polypeptide is Photosystem I P700 chlorophyll a apoprotein A2 (Chara vulgaris (Common stonewort)).